Consider the following 441-residue polypeptide: 3-phosphoshikimate 1-carboxyvinyltransferase (441 aa).

3-phosphoshikimate-binding residues include lysine 25, serine 26, and arginine 30. Lysine 25 provides a ligand contact to phosphoenolpyruvate. Phosphoenolpyruvate-binding residues include glycine 97 and arginine 125. Serine 169, glutamine 170, aspartate 311, and lysine 338 together coordinate 3-phosphoshikimate. Glutamine 170 contacts phosphoenolpyruvate. Aspartate 311 functions as the Proton acceptor in the catalytic mechanism. Positions 342, 383, and 410 each coordinate phosphoenolpyruvate.

Belongs to the EPSP synthase family. As to quaternary structure, monomer.

It is found in the cytoplasm. The enzyme catalyses 3-phosphoshikimate + phosphoenolpyruvate = 5-O-(1-carboxyvinyl)-3-phosphoshikimate + phosphate. The protein operates within metabolic intermediate biosynthesis; chorismate biosynthesis; chorismate from D-erythrose 4-phosphate and phosphoenolpyruvate: step 6/7. In terms of biological role, catalyzes the transfer of the enolpyruvyl moiety of phosphoenolpyruvate (PEP) to the 5-hydroxyl of shikimate-3-phosphate (S3P) to produce enolpyruvyl shikimate-3-phosphate and inorganic phosphate. The protein is 3-phosphoshikimate 1-carboxyvinyltransferase of Chlamydia muridarum (strain MoPn / Nigg).